We begin with the raw amino-acid sequence, 182 residues long: UPF0397 protein SPP_0507 (182 aa).

The next 5 helical transmembrane spans lie at 10–30 (VVAV…NIPT), 46–66 (LLSI…GHAI), 73–93 (YGLW…VGLF), 109–129 (ILIF…VLAP), and 148–168 (IVAG…LLLA).

Belongs to the UPF0397 family.

Its subcellular location is the cell membrane. In Streptococcus pneumoniae (strain P1031), this protein is UPF0397 protein SPP_0507.